Here is a 218-residue protein sequence, read N- to C-terminus: MAEITAQLVKELREKTGAGMMDCKKALKENEGDLEKSIEWLRQKGIASADKKSGRTAAEGLVHSYIHFGGRIGVLVEVNCETDFVARGDRFKDLVNDVAMQIAACPNVEYVSVADIPQEMVAKEKEIEMGRDDLGKKPANIKEKIVQGRIDKRLKELSLLDQPYIKDQNLTIEELVKQAIAELGENIQVRRFIRFNLGEGIEKAETNFAEEVAAAAKG.

The tract at residues 82–85 (TDFV) is involved in Mg(2+) ion dislocation from EF-Tu.

This sequence belongs to the EF-Ts family.

It localises to the cytoplasm. Functionally, associates with the EF-Tu.GDP complex and induces the exchange of GDP to GTP. It remains bound to the aminoacyl-tRNA.EF-Tu.GTP complex up to the GTP hydrolysis stage on the ribosome. In Synechocystis sp. (strain ATCC 27184 / PCC 6803 / Kazusa), this protein is Elongation factor Ts (tsf).